Consider the following 249-residue polypeptide: 4-hydroxy-tetrahydrodipicolinate reductase (249 aa).

NAD(+) contacts are provided by residues aspartate 32, 74 to 76 (GTT), and 99 to 102 (SANF). The active-site Proton donor/acceptor is histidine 134. A (S)-2,3,4,5-tetrahydrodipicolinate-binding site is contributed by histidine 135. The active-site Proton donor is the lysine 138. Residue 144 to 145 (GT) coordinates (S)-2,3,4,5-tetrahydrodipicolinate.

It belongs to the DapB family.

It localises to the cytoplasm. The enzyme catalyses (S)-2,3,4,5-tetrahydrodipicolinate + NAD(+) + H2O = (2S,4S)-4-hydroxy-2,3,4,5-tetrahydrodipicolinate + NADH + H(+). The catalysed reaction is (S)-2,3,4,5-tetrahydrodipicolinate + NADP(+) + H2O = (2S,4S)-4-hydroxy-2,3,4,5-tetrahydrodipicolinate + NADPH + H(+). The protein operates within amino-acid biosynthesis; L-lysine biosynthesis via DAP pathway; (S)-tetrahydrodipicolinate from L-aspartate: step 4/4. Catalyzes the conversion of 4-hydroxy-tetrahydrodipicolinate (HTPA) to tetrahydrodipicolinate. The sequence is that of 4-hydroxy-tetrahydrodipicolinate reductase from Chlorobaculum parvum (strain DSM 263 / NCIMB 8327) (Chlorobium vibrioforme subsp. thiosulfatophilum).